A 316-amino-acid chain; its full sequence is L-lactate dehydrogenase (316 aa).

34–39 (DVVEGV) provides a ligand contact to NAD(+). Arg-89, Asn-121, and Arg-152 together coordinate substrate. Asn-121 lines the NAD(+) pocket. His-172 (proton acceptor) is an active-site residue.

It belongs to the LDH/MDH superfamily. LDH family. Homotetramer.

It catalyses the reaction (S)-lactate + NAD(+) = pyruvate + NADH + H(+). It functions in the pathway fermentation; pyruvate fermentation to lactate; (S)-lactate from pyruvate: step 1/1. In Botryococcus braunii (Green alga), this protein is L-lactate dehydrogenase.